Consider the following 731-residue polypeptide: Inducible ornithine decarboxylase (731 aa).

Position 356 is an N6-(pyridoxal phosphate)lysine (lysine 356).

It belongs to the Orn/Lys/Arg decarboxylase class-I family. In terms of assembly, dodecamer. Requires pyridoxal 5'-phosphate as cofactor.

It carries out the reaction L-ornithine + H(+) = putrescine + CO2. This Lactobacillus sp. (strain 30a) protein is Inducible ornithine decarboxylase (odcI).